The following is a 195-amino-acid chain: Probable GTP-binding protein EngB (195 aa).

Positions 22–195 (GLPEIALAGR…WGAIKKMISR (174 aa)) constitute an EngB-type G domain. Residues 30-37 (GRSNVGKS), 57-61 (GKTQT), 75-78 (DVPG), 142-145 (TKAD), and 174-176 (FSS) each bind GTP. S37 and T59 together coordinate Mg(2+).

The protein belongs to the TRAFAC class TrmE-Era-EngA-EngB-Septin-like GTPase superfamily. EngB GTPase family. Requires Mg(2+) as cofactor.

In terms of biological role, necessary for normal cell division and for the maintenance of normal septation. The polypeptide is Probable GTP-binding protein EngB (Bacillus velezensis (strain DSM 23117 / BGSC 10A6 / LMG 26770 / FZB42) (Bacillus amyloliquefaciens subsp. plantarum)).